Consider the following 460-residue polypeptide: A-type ATP synthase subunit B 1 (460 aa).

It belongs to the ATPase alpha/beta chains family. As to quaternary structure, has multiple subunits with at least A(3), B(3), C, D, E, F, H, I and proteolipid K(x).

The protein resides in the cell membrane. Its function is as follows. Component of the A-type ATP synthase that produces ATP from ADP in the presence of a proton gradient across the membrane. The B chain is a regulatory subunit. In Methanospirillum hungatei JF-1 (strain ATCC 27890 / DSM 864 / NBRC 100397 / JF-1), this protein is A-type ATP synthase subunit B 1.